The following is a 663-amino-acid chain: RING finger protein 145 (663 aa).

Helical transmembrane passes span 53-73 (YLAL…LTLP), 77-97 (LVQL…HQIS), 123-143 (FTTA…VMKT), 146-166 (IWLF…VPLE), 168-188 (IVII…YFLG), 205-222 (LVQV…MSLW), 225-245 (LVVP…QIYS), 275-295 (YSLL…LTLC), 316-336 (TEGV…LQVV), 340-360 (FLLS…MLEI), 384-404 (SLCL…CQFF), 410-430 (LLII…TLFI), 460-480 (LLEF…TIFG), and 482-502 (WTVM…WLRA). Residues 81-84 (YLYF) carry the YLYF motif motif. Cys537 is a catalytic residue. An RING-type; atypical zinc finger spans residues 537 to 575 (CAICYQDMKSAVITPCSHFFHAGCLKKWLYVQDTCPLCH). The tract at residues 587–663 (LGTEAAPQPP…EGEVCPVESA (77 aa)) is disordered. The span at 619–628 (GTGTQEGSGD) shows a compositional bias: polar residues.

As to quaternary structure, interacts (via YLYF motif) with INSIG1 and INSIG2.

The protein localises to the endoplasmic reticulum membrane. The catalysed reaction is S-ubiquitinyl-[E2 ubiquitin-conjugating enzyme]-L-cysteine + [acceptor protein]-L-lysine = [E2 ubiquitin-conjugating enzyme]-L-cysteine + N(6)-ubiquitinyl-[acceptor protein]-L-lysine.. Its function is as follows. E3 ubiquitin ligase that catalyzes the direct transfer of ubiquitin from E2 ubiquitin-conjugating enzyme to a specific substrate. In response to bacterial infection, negatively regulates the phagocyte oxidative burst by controlling the turnover of the NADPH oxidase complex subunits. Promotes monoubiquitination of CYBA and 'Lys-48'-linked polyubiquitination and degradation of CYBB NADPH oxidase catalytic subunits, both essential for the generation of antimicrobial reactive oxygen species. Involved in the maintenance of cholesterol homeostasis. In response to high sterol concentrations ubiquitinates HMGCR, a rate-limiting enzyme in cholesterol biosynthesis, and targets it for degradation. The interaction with INSIG1 is required for this function. In addition, triggers ubiquitination of SCAP, likely inhibiting its transport to the Golgi apparatus and the subsequent processing/maturation of SREBPF2, ultimately down-regulating cholesterol biosynthesis. This chain is RING finger protein 145, found in Mus musculus (Mouse).